Consider the following 87-residue polypeptide: Defensin-like protein 100 (87 aa).

Residues 1–29 form the signal peptide; sequence MRSLRLRTVVVATIVVCLSVLLSPTEVDG. 4 cysteine pairs are disulfide-bonded: C31-C79, C38-C64, C44-C76, and C48-C78.

Belongs to the DEFL family.

Its subcellular location is the secreted. This chain is Defensin-like protein 100, found in Arabidopsis thaliana (Mouse-ear cress).